The sequence spans 824 residues: Neuronal PAS domain-containing protein 2 (824 aa).

Positions 1 to 10 are enriched in basic and acidic residues; the sequence is MDEDEKDRAK. Residues 1–21 form a disordered region; the sequence is MDEDEKDRAKRASRNKSEKKR. The sufficient for heterodimer formation with BMAL1, E-box binding and for the effect of NADPH stretch occupies residues 1 to 61; sequence MDEDEKDRAK…VIGFLQKHNE (61 aa). The bHLH domain occupies 9 to 59; it reads AKRASRNKSEKKRRDQFNVLIKELSSMLPGNTRKMDKTTVLEKVIGFLQKH. The PAS 1 domain occupies 82-152; it reads NEEFTQLMLE…KILSSHMLVT (71 aa). Heme b contacts are provided by histidine 119 and histidine 171. In terms of domain architecture, PAS 2 spans 237–307; it reads FLKEMCIVDE…RCHQHLMQFG (71 aa). Positions 311–354 constitute a PAC domain; it reads SCCYRFLTKGQQWIWLQTHYYITYHQWNSKPEFIVCTHSVVSYA. Disordered regions lie at residues 367–437, 556–667, 681–704, and 739–824; these read EDPP…MAEA, SSTQ…PDFS, QPMM…RQVK, and PSFP…QPPR. A compositionally biased stretch (basic and acidic residues) spans 378-390; that stretch reads ALKDKGSSLEPRQ. Residues 421-431 are compositionally biased toward polar residues; sequence TAMSEPTSTPT. A compositionally biased stretch (low complexity) spans 559 to 576; that stretch reads QRPEAQQQLQQRSAAVTQ. Polar residues predominate over residues 587-610; the sequence is GQISSAQVTSQHLLRESSVISTQG. Over residues 614 to 636 the composition is skewed to low complexity; that stretch reads MRSSQLMQSSGRSGSSLVSPFSS. Polar residues-rich tracts occupy residues 645 to 664 and 694 to 704; these read LNLT…QPSP and SEVSRTGRQVK. Positions 739–760 are enriched in low complexity; that stretch reads PSFPASQPSPLQPAQARQQPPQ. The segment covering 766-789 has biased composition (polar residues); that stretch reads QAPTSLHSEQQDSLLLSTYSQQPG. Over residues 794-805 the composition is skewed to pro residues; it reads PQPPPAQPQPLR. Over residues 809–824 the composition is skewed to low complexity; sequence RVSSLSESSGLQQPPR.

As to quaternary structure, component of the circadian clock oscillator which includes the CRY proteins, CLOCK or NPAS2, BMAL1 or BMAL2, CSNK1D and/or CSNK1E, TIMELESS and the PER proteins. Efficient DNA binding requires dimerization with another bHLH protein. Forms a heterodimer with BMAL1 and this heterodimerization is required for E-box-dependent transactivation. Interacts with NCOA3, KAT2B, CREBBP and EP300. The cofactor is heme.

It is found in the nucleus. Carbon monoxide (CO) and the redox state of the cell can modulate the transcriptional activity of the NPAS2-BMAL1 heterodimer. NADH and NADPH enhance the DNA-binding activity of the heterodimer whereas CO binds the heme group in NPAS2 and inhibits the DNA-binding activity of the heterodimer. Functionally, transcriptional activator which forms a core component of the circadian clock. The circadian clock, an internal time-keeping system, regulates various physiological processes through the generation of approximately 24 hour circadian rhythms in gene expression, which are translated into rhythms in metabolism and behavior. It is derived from the Latin roots 'circa' (about) and 'diem' (day) and acts as an important regulator of a wide array of physiological functions including metabolism, sleep, body temperature, blood pressure, endocrine, immune, cardiovascular, and renal function. Consists of two major components: the central clock, residing in the suprachiasmatic nucleus (SCN) of the brain, and the peripheral clocks that are present in nearly every tissue and organ system. Both the central and peripheral clocks can be reset by environmental cues, also known as Zeitgebers (German for 'timegivers'). The predominant Zeitgeber for the central clock is light, which is sensed by retina and signals directly to the SCN. The central clock entrains the peripheral clocks through neuronal and hormonal signals, body temperature and feeding-related cues, aligning all clocks with the external light/dark cycle. Circadian rhythms allow an organism to achieve temporal homeostasis with its environment at the molecular level by regulating gene expression to create a peak of protein expression once every 24 hours to control when a particular physiological process is most active with respect to the solar day. Transcription and translation of core clock components (CLOCK, NPAS2, BMAL1, BMAL2, PER1, PER2, PER3, CRY1 and CRY2) plays a critical role in rhythm generation, whereas delays imposed by post-translational modifications (PTMs) are important for determining the period (tau) of the rhythms (tau refers to the period of a rhythm and is the length, in time, of one complete cycle). A diurnal rhythm is synchronized with the day/night cycle, while the ultradian and infradian rhythms have a period shorter and longer than 24 hours, respectively. Disruptions in the circadian rhythms contribute to the pathology of cardiovascular diseases, cancer, metabolic syndromes and aging. A transcription/translation feedback loop (TTFL) forms the core of the molecular circadian clock mechanism. Transcription factors, CLOCK or NPAS2 and BMAL1 or BMAL2, form the positive limb of the feedback loop, act in the form of a heterodimer and activate the transcription of core clock genes and clock-controlled genes (involved in key metabolic processes), harboring E-box elements (5'-CACGTG-3') within their promoters. The core clock genes: PER1/2/3 and CRY1/2 which are transcriptional repressors form the negative limb of the feedback loop and interact with the CLOCK|NPAS2-BMAL1|BMAL2 heterodimer inhibiting its activity and thereby negatively regulating their own expression. This heterodimer also activates nuclear receptors NR1D1/2 and RORA/B/G, which form a second feedback loop and which activate and repress BMAL1 transcription, respectively. The NPAS2-BMAL1 heterodimer positively regulates the expression of MAOA, F7 and LDHA and modulates the circadian rhythm of daytime contrast sensitivity by regulating the rhythmic expression of adenylate cyclase type 1 (ADCY1) in the retina. NPAS2 plays an important role in sleep homeostasis and in maintaining circadian behaviors in normal light/dark and feeding conditions and in the effective synchronization of feeding behavior with scheduled food availability. Regulates the gene transcription of key metabolic pathways in the liver and is involved in DNA damage response by regulating several cell cycle and DNA repair genes. Controls the circadian rhythm of NR0B2 expression by binding rhythmically to its promoter. Mediates the diurnal variation in the expression of GABARA1 receptor in the brain and contributes to the regulation of anxiety-like behaviors and GABAergic neurotransmission in the ventral striatum. The protein is Neuronal PAS domain-containing protein 2 (NPAS2) of Homo sapiens (Human).